The sequence spans 190 residues: Imidazoleglycerol-phosphate dehydratase (190 aa).

This sequence belongs to the imidazoleglycerol-phosphate dehydratase family.

The protein resides in the cytoplasm. The enzyme catalyses D-erythro-1-(imidazol-4-yl)glycerol 3-phosphate = 3-(imidazol-4-yl)-2-oxopropyl phosphate + H2O. Its pathway is amino-acid biosynthesis; L-histidine biosynthesis; L-histidine from 5-phospho-alpha-D-ribose 1-diphosphate: step 6/9. This Campylobacter fetus subsp. fetus (strain 82-40) protein is Imidazoleglycerol-phosphate dehydratase.